Reading from the N-terminus, the 167-residue chain is Peptide deformylase (167 aa).

The Fe cation site is built by Cys-91 and His-133. Residue Glu-134 is part of the active site. Residue His-137 coordinates Fe cation.

This sequence belongs to the polypeptide deformylase family. It depends on Fe(2+) as a cofactor.

It catalyses the reaction N-terminal N-formyl-L-methionyl-[peptide] + H2O = N-terminal L-methionyl-[peptide] + formate. In terms of biological role, removes the formyl group from the N-terminal Met of newly synthesized proteins. Requires at least a dipeptide for an efficient rate of reaction. N-terminal L-methionine is a prerequisite for activity but the enzyme has broad specificity at other positions. The polypeptide is Peptide deformylase (Neisseria meningitidis serogroup C (strain 053442)).